The chain runs to 409 residues: All trans-polyprenyl-diphosphate synthase PDSS1 (409 aa).

Isopentenyl diphosphate-binding residues include lysine 128, arginine 131, and histidine 167. Mg(2+) contacts are provided by aspartate 174 and aspartate 178. Arginine 184 contacts isopentenyl diphosphate.

The protein belongs to the FPP/GGPP synthase family. In terms of assembly, heterotetramer composed of 2 PDSS1/DPS1 and 2 PDSS2/DLP1 subunits. Mg(2+) serves as cofactor.

The protein resides in the mitochondrion. It catalyses the reaction 7 isopentenyl diphosphate + (2E,6E)-farnesyl diphosphate = all-trans-decaprenyl diphosphate + 7 diphosphate. The enzyme catalyses 6 isopentenyl diphosphate + (2E,6E)-farnesyl diphosphate = all-trans-nonaprenyl diphosphate + 6 diphosphate. Its pathway is cofactor biosynthesis; ubiquinone biosynthesis. In terms of biological role, heterotetrameric enzyme that catalyzes the condensation of farnesyl diphosphate (FPP), which acts as a primer, and isopentenyl diphosphate (IPP) to produce prenyl diphosphates of varying chain lengths and participates in the determination of the side chain of ubiquinone. Supplies nona and decaprenyl diphosphate, the precursors for the side chain of the isoprenoid quinones ubiquinone-9 (Q9)and ubiquinone-10 (Q10) respectively. The enzyme adds isopentenyl diphosphate molecules sequentially to farnesyl diphosphate with trans stereochemistry. The polypeptide is All trans-polyprenyl-diphosphate synthase PDSS1 (Mus musculus (Mouse)).